The primary structure comprises 309 residues: Probable manganese-dependent inorganic pyrophosphatase (309 aa).

Mn(2+)-binding residues include His9, Asp13, Asp15, Asp75, His97, and Asp149.

It belongs to the PPase class C family. Requires Mn(2+) as cofactor.

The protein resides in the cytoplasm. The catalysed reaction is diphosphate + H2O = 2 phosphate + H(+). The protein is Probable manganese-dependent inorganic pyrophosphatase of Bacillus mycoides (strain KBAB4) (Bacillus weihenstephanensis).